A 190-amino-acid polypeptide reads, in one-letter code: Elongation factor P-like protein (190 aa).

Belongs to the elongation factor P family.

The chain is Elongation factor P-like protein from Salmonella gallinarum (strain 287/91 / NCTC 13346).